Here is a 140-residue protein sequence, read N- to C-terminus: MAKKVEKVVKLQIPAGKANPAPPVGPALGQAGVNIMGFCKEFNARTQEQAGLIIPVEISVYEDRSFTFITKTPPAPVLLKKAAGVEKGSGEPNKNKVATVTKDQVREIAQTKMPDLNAADEEAAMRIIEGTARSMGITVE.

The protein belongs to the universal ribosomal protein uL11 family. Part of the ribosomal stalk of the 50S ribosomal subunit. Interacts with L10 and the large rRNA to form the base of the stalk. L10 forms an elongated spine to which L12 dimers bind in a sequential fashion forming a multimeric L10(L12)X complex. In terms of processing, one or more lysine residues are methylated.

Its function is as follows. Forms part of the ribosomal stalk which helps the ribosome interact with GTP-bound translation factors. The polypeptide is Large ribosomal subunit protein uL11 (Staphylococcus carnosus (strain TM300)).